We begin with the raw amino-acid sequence, 1203 residues long: Cation-transporting ATPase catp-5 (1203 aa).

The Cytoplasmic segment spans residues 1-68; it reads MNTSEREPLL…YAYKETIGRQ (68 aa). Residues 21–42 form a disordered region; the sequence is TTDNPSTKIMKREKDNPKAKTT. The chain crosses the membrane as a helical span at residues 69 to 89; that stretch reads ILFWLLTIVTLGFYQLLAYWV. At 90 to 209 the chain is on the extracellular side; it reads KSLFVKVRFQ…RKIYNMNALA (120 aa). A helical membrane pass occupies residues 210–230; it reads LALTPILVILFKEVLGPFYLF. The Cytoplasmic portion of the chain corresponds to 231-242; sequence QCFSVALWYSDN. The helical transmembrane segment at 243–263 threads the bilayer; it reads YAYYASVIVIITVGSAAVAVY. Over 264 to 297 the chain is Extracellular; sequence QMRAQEKRIRNMVGDTISVIVRRDGHDITIDASE. Residues 298–318 traverse the membrane as a helical segment; the sequence is IVPMDILILPSNTFILPCDCL. Topologically, residues 319 to 414 are cytoplasmic; sequence LMNGTVIVNE…KPQEKEALKD (96 aa). The helical transmembrane segment at 415–435 threads the bilayer; sequence VMVFILVLGFIALIGFIYTVI. Residues 436–451 are Extracellular-facing; sequence EMVSRGESLKHIIIRS. A helical membrane pass occupies residues 452 to 472; that stretch reads LDIITIVVPPALPAAMSVGII. Over 473–935 the chain is Cytoplasmic; it reads NANSRLKKKK…KEGRCALVTS (463 aa). D503 (4-aspartylphosphate intermediate) is an active-site residue. The segment at 595–617 is disordered; that stretch reads ETQDFDTVQPTVLRPPPEQATYH. Positions 883 and 887 each coordinate Mg(2+). Residues 936 to 956 form a helical membrane-spanning segment; it reads YAVSKYMAAYSLNEFLSVMLL. The Extracellular segment spans residues 957–962; that stretch reads YNDGTN. The helical transmembrane segment at 963-983 threads the bilayer; the sequence is ISDGQFLYIDLVLITLVALFL. Residues 984–1007 lie on the Cytoplasmic side of the membrane; the sequence is GNTEASRKLSGIPPPRRLATSAFY. A helical membrane pass occupies residues 1008–1028; sequence FSVFGQMFFNIITQTTGYLLV. Over 1029 to 1046 the chain is Extracellular; it reads RGQSWYVPNPEELDNTTT. The chain crosses the membrane as a helical span at residues 1047–1067; that stretch reads MIGTTVFFTSCCMYLGYAFVY. Residues 1068–1085 lie on the Cytoplasmic side of the membrane; that stretch reads SKGHPYRRSVFTNWLLCG. The chain crosses the membrane as a helical span at residues 1086-1106; the sequence is IIFVIGAINMVMIFTNMGFLM. The Extracellular portion of the chain corresponds to 1107–1120; sequence NLMGFVYVPSTSMR. A helical transmembrane segment spans residues 1121–1141; sequence FILLAISLAGVFLSLLYEHFF. Topologically, residues 1142–1203 are cytoplasmic; it reads VEKVVAIHFE…DRKETIESKC (62 aa).

It belongs to the cation transport ATPase (P-type) (TC 3.A.3) family. Type V subfamily. Expressed in the 20 intestinal cells and in the excretory cell.

Its subcellular location is the apical cell membrane. It carries out the reaction ATP + H2O = ADP + phosphate + H(+). Involved in the uptake and/or transport of polyamines, probably through ATP hydrolysis. This contributes to the maintenance of intracellular polyamine levels. Polyamines are essential for cell proliferation and are implicated in cellular processes, ranging from DNA replication to apoptosis. This chain is Cation-transporting ATPase catp-5, found in Caenorhabditis elegans.